The chain runs to 184 residues: Cytosolic Prostaglandin E synthase (184 aa).

Residues 7–96 (LIPPPVSWAQ…AAGPYWSSLT (90 aa)) form the CS domain. A disordered region spans residues 115-184 (ESDDEEGDQK…EGDKEKKPAA (70 aa)). Phosphoserine is present on residues Ser116, Ser127, Ser135, Ser156, and Ser162. The span at 147-158 (FNVDDEEEDSDD) shows a compositional bias: acidic residues. Over residues 175–184 (EGDKEKKPAA) the composition is skewed to basic and acidic residues.

This sequence belongs to the p23/wos2 family.

The protein localises to the cytoplasm. The enzyme catalyses prostaglandin H2 = prostaglandin E2. Cytosolic prostaglandin synthase that catalyzes the oxidoreduction of prostaglandin endoperoxide H2 (PGH2) to prostaglandin E2 (PGE2). Through production of PGE2 may regulate the activity of non-muscle myosin II in an autocrine or paracrine fashion; this may influence border cell and nurse cell stiffness to facilitate border cell migration during oogenesis. This Drosophila melanogaster (Fruit fly) protein is Cytosolic Prostaglandin E synthase.